The following is a 4151-amino-acid chain: Mycoketide-CoA synthase (4151 aa).

A coiled-coil region spans residues 2 to 32 (VDQLQHATEALRKALVQVERLKRTNRALLER). Residues 34 to 457 (SEPIAIVGMS…GTNAHVIIEA (424 aa)) enclose the Ketosynthase family 3 (KS3) 1 domain. 2 module regions span residues 35–2038 (EPIA…RTEL) and 2057–4070 (DPIA…RREL). Cys-203 functions as the Acyl-thioester intermediate; for beta-ketoacyl synthase 1 activity in the catalytic mechanism. Active-site for beta-ketoacyl synthase 1 activity residues include His-338 and His-379. Positions 559–880 (VFVFPGQGSQ…AASAFVAGVA (322 aa)) are acyltransferase 1. Residue Ser-650 is the Acyl-ester intermediate; for acyltransferase 1 activity of the active site. The tract at residues 926–1048 (HPLLGAVVDL…GILRPGSVEP (123 aa)) is N-terminal hotdog fold 1. The segment at 926-1194 (HPLLGAVVDL…VARPVTERQL (269 aa)) is dehydratase 1. The PKS/mFAS DH 1 domain occupies 926-1195 (HPLLGAVVDL…ARPVTERQLL (270 aa)). His-958 serves as the catalytic Proton acceptor; for dehydratase activity 1. A C-terminal hotdog fold 1 region spans residues 1060–1195 (AVTVDVADGY…ARPVTERQLL (136 aa)). Catalysis depends on Asp-1120, which acts as the Proton donor; for dehydratase activity 1. The segment at 1366–1671 (GTFENLRLEP…QARHTGKVVM (306 aa)) is enoyl reductase 1. The tract at residues 1680 to 1858 (GTVLITGGTG…AISLGWGLWD (179 aa)) is beta-ketoacyl reductase 1. The For beta-ketoacyl reductase 1 activity role is filled by Tyr-1828. The 76-residue stretch at 1963–2038 (AVLLGLVRLH…RLASYIRTEL (76 aa)) folds into the Carrier 1 domain. At Ser-1998 the chain carries O-(pantetheine 4'-phosphoryl)serine. In terms of domain architecture, Ketosynthase family 3 (KS3) 2 spans 2056–2480 (EDPIAIVGMA…GTNAHVIIEA (425 aa)). The Acyl-thioester intermediate; for beta-ketoacyl synthase 2 activity role is filled by Cys-2226. Catalysis depends on for beta-ketoacyl synthase 2 activity residues His-2361 and His-2402. The segment at 2582–2893 (VFVFPGQGSQ…AVAQGFVTGM (312 aa)) is acyltransferase 2. Residue Ser-2672 is the Acyl-ester intermediate; for acyltransferase 2 activity of the active site. Positions 2940 to 3062 (HALLGAVIDL…GALRAGSAEP (123 aa)) are N-terminal hotdog fold 2. The segment at 2940–3215 (HALLGAVIDL…ARPVTDQQLR (276 aa)) is dehydratase 2. One can recognise a PKS/mFAS DH 2 domain in the interval 2940–3215 (HALLGAVIDL…ARPVTDQQLR (276 aa)). His-2972 functions as the Proton acceptor; for dehydratase activity 2 in the catalytic mechanism. A C-terminal hotdog fold 2 region spans residues 3074 to 3215 (AVPVEVADGY…ARPVTDQQLR (142 aa)). The active-site Proton donor; for dehydratase activity 2 is the Asp-3135. Residues 3395–3701 (GTFENLRLEL…QARHTGKVVM (307 aa)) are enoyl reductase 2. Residues 3710 to 3888 (GTVLITGGTG…AISLGWGLWD (179 aa)) form a beta-ketoacyl reductase 2 region. Tyr-3858 acts as the For beta-ketoacyl reductase 2 activity in catalysis. One can recognise a Carrier 2 domain in the interval 3995-4070 (AVLLDLVRSH…ALAGYMRREL (76 aa)). Ser-4030 is modified (O-(pantetheine 4'-phosphoryl)serine).

As to quaternary structure, forms a large supramolecular assembly mediated through specific interactions between the N- and C-terminus linkers.

It carries out the reaction a medium-chain fatty acyl-CoA + 5 (S)-methylmalonyl-CoA + 5 malonyl-CoA + 22 NADPH + 32 H(+) = a mycoketide-CoA + 10 CO2 + 22 NADP(+) + 10 CoA + 11 H2O. It participates in lipid metabolism; fatty acid metabolism. Functionally, involved in the synthesis of beta-D-mannosyl phosphomycoketide (MPM), an antigenic mycobacterial polyketide. Binds a fatty acyl-CoA as a starter unit, and extends it by five rounds of alternative additions of malonyl-CoA and methylmalonyl-CoA extender units. Depending on the starter unit, the enzyme forms mycoketide-CoAs of different lengths. Shows preference for small-/medium-chain starter fatty acyl substrates. Uses a hybrid modularly iterative mechanism, by forming a supramolecular assembly to perform repetitive cycles of iterations. The sequence is that of Mycoketide-CoA synthase from Mycobacterium tuberculosis (strain ATCC 25618 / H37Rv).